The chain runs to 592 residues: Bifunctional purine biosynthesis protein ATIC (592 aa).

Methionine 1 is subject to N-acetylmethionine. One can recognise an MGS-like domain in the interval 1 to 146 (MASSQLALFS…KNHARVTVVC (146 aa)). The interval 1–198 (MASSQLALFS…ISDYFRRQYS (198 aa)) is IMP cyclohydrolase. IMP contacts are provided by residues 12-14 (SDK), 34-37 (SGGT), 64-67 (RVKT), 101-102 (CN), and 125-126 (DI). Lysine 137 (proton donor/acceptor; for FAICAR cyclization activity) is an active-site residue. Lysine 199 bears the N6-acetyllysine mark. The segment at 199-592 (KGISQMPLRY…AHTDLRLFHH (394 aa)) is AICAR formyltransferase. Residues 207 to 208 (RY), histidine 267, glycine 316, aspartate 339, asparagine 431, and arginine 451 contribute to the 5-amino-1-(5-phospho-beta-D-ribosyl)imidazole-4-carboxamide site. The active-site Proton acceptor; for AICAR formyltransferase activity is the histidine 267. Isoleucine 452 is a binding site for (6R)-10-formyltetrahydrofolate. Phenylalanine 541 lines the 5-amino-1-(5-phospho-beta-D-ribosyl)imidazole-4-carboxamide pocket. (6R)-10-formyltetrahydrofolate is bound by residues aspartate 546 and 565–566 (ST). Arginine 588 contributes to the 5-amino-1-(5-phospho-beta-D-ribosyl)imidazole-4-carboxamide binding site.

This sequence belongs to the PurH family. Homodimer. Associates with internalized INSR complexes on Golgi/endosomal membranes. Interacts with INSR; ATIC together with PRKAA2/AMPK2 and HACD3/PTPLAD1 is proposed to be part of a signaling network regulating INSR autophosphorylation and endocytosis. In terms of tissue distribution, expressed in liver.

Its subcellular location is the cytoplasm. It is found in the cytosol. It catalyses the reaction (6R)-10-formyltetrahydrofolate + 5-amino-1-(5-phospho-beta-D-ribosyl)imidazole-4-carboxamide = 5-formamido-1-(5-phospho-D-ribosyl)imidazole-4-carboxamide + (6S)-5,6,7,8-tetrahydrofolate. It carries out the reaction 10-formyldihydrofolate + 5-amino-1-(5-phospho-beta-D-ribosyl)imidazole-4-carboxamide = 5-formamido-1-(5-phospho-D-ribosyl)imidazole-4-carboxamide + 7,8-dihydrofolate. The enzyme catalyses IMP + H2O = 5-formamido-1-(5-phospho-D-ribosyl)imidazole-4-carboxamide. The protein operates within purine metabolism; IMP biosynthesis via de novo pathway; 5-formamido-1-(5-phospho-D-ribosyl)imidazole-4-carboxamide from 5-amino-1-(5-phospho-D-ribosyl)imidazole-4-carboxamide (10-formyl THF route): step 1/1. It functions in the pathway purine metabolism; IMP biosynthesis via de novo pathway; IMP from 5-formamido-1-(5-phospho-D-ribosyl)imidazole-4-carboxamide: step 1/1. Its activity is regulated as follows. AMP and XMP inhibit AICAR formyltransferase activity. Bifunctional enzyme that catalyzes the last two steps of purine biosynthesis. Acts as a transformylase that incorporates a formyl group to the AMP analog AICAR (5-amino-1-(5-phospho-beta-D-ribosyl)imidazole-4-carboxamide) to produce the intermediate formyl-AICAR (FAICAR). Can use both 10-formyldihydrofolate and 10-formyltetrahydrofolate as the formyl donor in this reaction. Also catalyzes the cyclization of FAICAR to inosine monophosphate (IMP). Promotes insulin receptor/INSR autophosphorylation and is involved in INSR internalization. The chain is Bifunctional purine biosynthesis protein ATIC (Atic) from Rattus norvegicus (Rat).